The primary structure comprises 37 residues: Cytochrome b6-f complex subunit 5 (37 aa).

Residues 5–25 (FLLGIILGLIPITLIGLFVTA) form a helical membrane-spanning segment.

Belongs to the PetG family. The 4 large subunits of the cytochrome b6-f complex are cytochrome b6, subunit IV (17 kDa polypeptide, PetD), cytochrome f and the Rieske protein, while the 4 small subunits are PetG, PetL, PetM and PetN. The complex functions as a dimer.

The protein resides in the plastid membrane. Component of the cytochrome b6-f complex, which mediates electron transfer between photosystem II (PSII) and photosystem I (PSI), cyclic electron flow around PSI, and state transitions. PetG is required for either the stability or assembly of the cytochrome b6-f complex. This Cuscuta obtusiflora (Peruvian dodder) protein is Cytochrome b6-f complex subunit 5.